The following is a 374-amino-acid chain: MKYLLPSAAAGLLLLAAQPTMAANTGGYATTDGGDVAGAVKKTARSMQDIIDIIEAAKLDSNGKKVKGGAYPLVITYNGNEDALIKAAENDICGQWKKDARGVEIKEFTKGITIIGTNGSSANFGIWLTKSSDIVIRNMRFGYMPGGAQDGDAIRIDNTPNVWIDHNEIFAKNFECAGTKDGDTTFESAIDIKKASTNVTVSYNYIHGIKKVGLSGFSSSDTGRDLTYHHNIYDDVNARLPLQRGGQVHAYNNLYTGITSSGLNVRQKGIALIERNWFENAKNPVTSRYDGSNFGTWELRNNNVMSPADFAKYNITWDKDTKPYVNAEDWKSTGTFASVPYSYSPVSAQCVKDKLANYAGVNKNLAVLTAANCN.

The signal sequence occupies residues 1-22; sequence MKYLLPSAAAGLLLLAAQPTMA. A disulfide bridge links C93 with C176. Residues D150, D152, E187, and D191 each contribute to the Ca(2+) site. R239 is an active-site residue. A disulfide bridge links C350 with C373.

Belongs to the polysaccharide lyase 1 family. PLADES subfamily. Requires Ca(2+) as cofactor.

The protein resides in the secreted. The enzyme catalyses Eliminative cleavage of (1-&gt;4)-alpha-D-galacturonan to give oligosaccharides with 4-deoxy-alpha-D-galact-4-enuronosyl groups at their non-reducing ends.. Its pathway is glycan metabolism; pectin degradation; 2-dehydro-3-deoxy-D-gluconate from pectin: step 2/5. Functionally, involved in maceration and soft-rotting of plant tissue. This is Pectate lyase 3 (pel3) from Pectobacterium carotovorum subsp. carotovorum (Erwinia carotovora subsp. carotovora).